The sequence spans 196 residues: Peptidyl-tRNA hydrolase (196 aa).

Tyr-18 is a tRNA binding site. Catalysis depends on His-23, which acts as the Proton acceptor. TRNA contacts are provided by Phe-69, Asn-71, and Asn-117.

The protein belongs to the PTH family. In terms of assembly, monomer.

The protein localises to the cytoplasm. The enzyme catalyses an N-acyl-L-alpha-aminoacyl-tRNA + H2O = an N-acyl-L-amino acid + a tRNA + H(+). Its function is as follows. Hydrolyzes ribosome-free peptidyl-tRNAs (with 1 or more amino acids incorporated), which drop off the ribosome during protein synthesis, or as a result of ribosome stalling. Catalyzes the release of premature peptidyl moieties from peptidyl-tRNA molecules trapped in stalled 50S ribosomal subunits, and thus maintains levels of free tRNAs and 50S ribosomes. The protein is Peptidyl-tRNA hydrolase of Vibrio parahaemolyticus serotype O3:K6 (strain RIMD 2210633).